A 64-amino-acid polypeptide reads, in one-letter code: Large ribosomal subunit protein bL35 (64 aa).

It belongs to the bacterial ribosomal protein bL35 family.

This chain is Large ribosomal subunit protein bL35, found in Helicobacter hepaticus (strain ATCC 51449 / 3B1).